Here is an 89-residue protein sequence, read N- to C-terminus: Large ribosomal subunit protein bL27 (89 aa).

The interval 1–20 is disordered; that stretch reads MAHKKAGGSSRNGRDSAGRR.

The protein belongs to the bacterial ribosomal protein bL27 family.

The sequence is that of Large ribosomal subunit protein bL27 from Zymomonas mobilis subsp. mobilis (strain ATCC 31821 / ZM4 / CP4).